A 72-amino-acid chain; its full sequence is Translation initiation factor IF-1 (72 aa).

Residues 1–72 (MSDKSIKMQA…SNGRITYRHK (72 aa)) enclose the S1-like domain.

It belongs to the IF-1 family. Component of the 30S ribosomal translation pre-initiation complex which assembles on the 30S ribosome in the order IF-2 and IF-3, IF-1 and N-formylmethionyl-tRNA(fMet); mRNA recruitment can occur at any time during PIC assembly.

The protein localises to the cytoplasm. One of the essential components for the initiation of protein synthesis. Stabilizes the binding of IF-2 and IF-3 on the 30S subunit to which N-formylmethionyl-tRNA(fMet) subsequently binds. Helps modulate mRNA selection, yielding the 30S pre-initiation complex (PIC). Upon addition of the 50S ribosomal subunit IF-1, IF-2 and IF-3 are released leaving the mature 70S translation initiation complex. This Mycoplasmopsis pulmonis (strain UAB CTIP) (Mycoplasma pulmonis) protein is Translation initiation factor IF-1.